We begin with the raw amino-acid sequence, 410 residues long: Monoglucosyldiacylglycerol epimerase (410 aa).

Residues 1–14 (MAMAWLMGLGLALA) form the signal peptide. 2 helical membrane passes run 71 to 91 (ALVMLAFGIWPPLLTWMWQGF) and 96 to 116 (LILAASAGMVYTLGFLLSAIA). Catalysis depends on Tyr-320, which acts as the Proton acceptor. A helical transmembrane segment spans residues 380-400 (IIVTINPITFIAFPVKEFFVS).

The protein belongs to the short-chain dehydrogenases/reductases (SDR) family.

It localises to the membrane. The enzyme catalyses a 1,2-diacyl-3-O-(beta-D-glucopyranosyl)-sn-glycerol = a 1,2-diacyl-3-O-(beta-D-galactosyl)-sn-glycerol. In terms of biological role, involved in the biosynthesis of galactolipids found in the photosynthetic membranes. Catalyzes the isomerization of monoglucosyldiacylglycerol (GlcDG) to yield monogalactosyldiacylglycerol (MGDG). The protein is Monoglucosyldiacylglycerol epimerase of Synechocystis sp. (strain ATCC 27184 / PCC 6803 / Kazusa).